A 563-amino-acid polypeptide reads, in one-letter code: Beta-catenin-like protein 1 (563 aa).

An N-acetylmethionine modification is found at M1. The interval M1–S81 is disordered. The Nuclear localization signal motif lies at K16 to T33. A compositionally biased stretch (basic and acidic residues) spans G34–E45. Acidic residues predominate over residues D66–D78. 2 HEAT repeats span residues E79–T129 and Y134–E176. Position 91 is an N6-acetyllysine (K91). The Nuclear export signal (NES) motif lies at M130–L140. 5 ARM repeats span residues E178–F228, R229–N273, D274–L323, S325–G363, and P364–N417. S389 bears the Phosphoserine mark. A coiled-coil region spans residues D476–I540. S545 carries the phosphoserine modification.

Component of the PRP19-CDC5L splicing complex composed of a core complex comprising a homotetramer of PRPF19, CDC5L, PLRG1 and BCAS2, and at least three less stably associated proteins CTNNBL1, CWC15 and HSPA8. Interacts directly with CWC15 and CDC5L in the complex. Interacts with AICDA; the interaction is important for the antibody diversification activity of AICDA. Interacts with PRPF31 (via its NLS). Interacts (via its N-terminal NLS) with KPNA1 and KPNA2.

The protein resides in the nucleus. Component of the PRP19-CDC5L complex that forms an integral part of the spliceosome and is required for activating pre-mRNA splicing. Participates in AID/AICDA-mediated somatic hypermutation (SHM) and class-switch recombination (CSR), 2 processes resulting in the production of high-affinity, mutated isotype-switched antibodies. This chain is Beta-catenin-like protein 1 (Ctnnbl1), found in Rattus norvegicus (Rat).